Consider the following 454-residue polypeptide: Putative flavin-containing monoamine oxidase AofH (454 aa).

The protein belongs to the flavin monoamine oxidase family. Requires FAD as cofactor.

The chain is Putative flavin-containing monoamine oxidase AofH (aofH) from Mycobacterium tuberculosis (strain CDC 1551 / Oshkosh).